The sequence spans 67 residues: Large ribosomal subunit protein bL31 (67 aa).

Residues cysteine 16, cysteine 18, cysteine 36, and cysteine 39 each coordinate Zn(2+).

It belongs to the bacterial ribosomal protein bL31 family. Type A subfamily. In terms of assembly, part of the 50S ribosomal subunit. Requires Zn(2+) as cofactor.

Its function is as follows. Binds the 23S rRNA. In Desulforudis audaxviator (strain MP104C), this protein is Large ribosomal subunit protein bL31.